The primary structure comprises 844 residues: DNA mismatch repair protein MutS (844 aa).

610–617 lines the ATP pocket; the sequence is GPNMGGKS.

The protein belongs to the DNA mismatch repair MutS family.

This protein is involved in the repair of mismatches in DNA. It is possible that it carries out the mismatch recognition step. This protein has a weak ATPase activity. This is DNA mismatch repair protein MutS from Francisella tularensis subsp. holarctica (strain FTNF002-00 / FTA).